Consider the following 747-residue polypeptide: Ubiquitin carboxyl-terminal hydrolase 13 (747 aa).

A USP domain is found at 140-668 (FGYENFGNTC…TAYVLFYKAM (529 aa)). C149 acts as the Nucleophile in catalysis. 2 disordered regions span residues 172-305 (PKKS…RPPD) and 318-367 (YENP…RKKS). Basic and acidic residues predominate over residues 174–183 (KSRESDQPRK). At S198 the chain carries Phosphoserine. The span at 225–235 (PVNSVNSNTAG) shows a compositional bias: polar residues. Over residues 251–260 (HVQDNNKKEG) the composition is skewed to basic and acidic residues. Residues 319–343 (ENPSRGSSNSNNLDLKGESNSSLST) show a composition bias toward polar residues. H619 acts as the Proton acceptor in catalysis.

Belongs to the peptidase C19 family.

The enzyme catalyses Thiol-dependent hydrolysis of ester, thioester, amide, peptide and isopeptide bonds formed by the C-terminal Gly of ubiquitin (a 76-residue protein attached to proteins as an intracellular targeting signal).. The chain is Ubiquitin carboxyl-terminal hydrolase 13 (UBP13) from Saccharomyces cerevisiae (strain ATCC 204508 / S288c) (Baker's yeast).